The sequence spans 346 residues: Magnesium-protoporphyrin IX monomethyl ester [oxidative] cyclase (346 aa).

The protein belongs to the AcsF family. It depends on Fe cation as a cofactor.

It catalyses the reaction Mg-protoporphyrin IX 13-monomethyl ester + 3 NADPH + 3 O2 + 2 H(+) = 3,8-divinyl protochlorophyllide a + 3 NADP(+) + 5 H2O. It functions in the pathway porphyrin-containing compound metabolism; chlorophyll biosynthesis (light-independent). Catalyzes the formation of the isocyclic ring in chlorophyll biosynthesis. Mediates the cyclase reaction, which results in the formation of divinylprotochlorophyllide (Pchlide) characteristic of all chlorophylls from magnesium-protoporphyrin IX 13-monomethyl ester (MgPMME). The protein is Magnesium-protoporphyrin IX monomethyl ester [oxidative] cyclase of Gloeobacter violaceus (strain ATCC 29082 / PCC 7421).